Reading from the N-terminus, the 269-residue chain is 4-hydroxy-tetrahydrodipicolinate reductase (269 aa).

Residues 12 to 17 (GGSGRM), 102 to 104 (GTT), and 126 to 129 (SPNM) contribute to the NAD(+) site. H159 acts as the Proton donor/acceptor in catalysis. H160 serves as a coordination point for (S)-2,3,4,5-tetrahydrodipicolinate. K163 functions as the Proton donor in the catalytic mechanism. Residue 169-170 (GT) coordinates (S)-2,3,4,5-tetrahydrodipicolinate.

This sequence belongs to the DapB family.

It localises to the cytoplasm. The catalysed reaction is (S)-2,3,4,5-tetrahydrodipicolinate + NAD(+) + H2O = (2S,4S)-4-hydroxy-2,3,4,5-tetrahydrodipicolinate + NADH + H(+). It catalyses the reaction (S)-2,3,4,5-tetrahydrodipicolinate + NADP(+) + H2O = (2S,4S)-4-hydroxy-2,3,4,5-tetrahydrodipicolinate + NADPH + H(+). The protein operates within amino-acid biosynthesis; L-lysine biosynthesis via DAP pathway; (S)-tetrahydrodipicolinate from L-aspartate: step 4/4. Its function is as follows. Catalyzes the conversion of 4-hydroxy-tetrahydrodipicolinate (HTPA) to tetrahydrodipicolinate. This Leptospira borgpetersenii serovar Hardjo-bovis (strain JB197) protein is 4-hydroxy-tetrahydrodipicolinate reductase.